Reading from the N-terminus, the 261-residue chain is Kallikrein 1-related peptidase b16 (261 aa).

Residues 1-18 (MWFLILFLALSLGGIDAA) form the signal peptide. A propeptide spans 19–24 (PPVQSR) (activation peptide). One can recognise a Peptidase S1 domain in the interval 25 to 258 (IVGGFKCEKN…FNSWIKDTMM (234 aa)). 5 disulfides stabilise this stretch: Cys-31/Cys-173, Cys-50/Cys-66, Cys-152/Cys-219, Cys-184/Cys-198, and Cys-209/Cys-234. The active-site Charge relay system is the His-65. Asn-102 carries N-linked (GlcNAc...) asparagine glycosylation. The active-site Charge relay system is Asp-120. Ser-213 serves as the catalytic Charge relay system.

It belongs to the peptidase S1 family. Kallikrein subfamily.

It carries out the reaction Cleavage of the Leu-|-Leu bond in synthetic tetradecapeptide renin substrate, to produce angiotensin I, but not active on natural angiotensinogen. Also hydrolyzes Bz-Arg-p-nitroanilide.. The protein is Kallikrein 1-related peptidase b16 (Klk1b16) of Mus musculus (Mouse).